The primary structure comprises 34 residues: Egg-releasing peptide (34 aa).

This is Egg-releasing peptide from Aplysia californica (California sea hare).